Reading from the N-terminus, the 104-residue chain is Large ribosomal subunit protein uL24 (104 aa).

The protein belongs to the universal ribosomal protein uL24 family. In terms of assembly, part of the 50S ribosomal subunit.

Functionally, one of two assembly initiator proteins, it binds directly to the 5'-end of the 23S rRNA, where it nucleates assembly of the 50S subunit. Its function is as follows. One of the proteins that surrounds the polypeptide exit tunnel on the outside of the subunit. This Buchnera aphidicola subsp. Schizaphis graminum (strain Sg) protein is Large ribosomal subunit protein uL24.